Consider the following 390-residue polypeptide: 1-deoxy-D-xylulose 5-phosphate reductoisomerase (390 aa).

Residues threonine 18, glycine 19, serine 20, isoleucine 21, and asparagine 130 each coordinate NADPH. Lysine 131 serves as a coordination point for 1-deoxy-D-xylulose 5-phosphate. Glutamate 132 is a binding site for NADPH. Aspartate 156 serves as a coordination point for Mn(2+). 1-deoxy-D-xylulose 5-phosphate contacts are provided by serine 157, glutamate 158, serine 182, and histidine 205. Glutamate 158 serves as a coordination point for Mn(2+). Glycine 211 provides a ligand contact to NADPH. The 1-deoxy-D-xylulose 5-phosphate site is built by serine 218, asparagine 223, lysine 224, and glutamate 227. A Mn(2+)-binding site is contributed by glutamate 227.

The protein belongs to the DXR family. Requires Mg(2+) as cofactor. Mn(2+) is required as a cofactor.

It carries out the reaction 2-C-methyl-D-erythritol 4-phosphate + NADP(+) = 1-deoxy-D-xylulose 5-phosphate + NADPH + H(+). It participates in isoprenoid biosynthesis; isopentenyl diphosphate biosynthesis via DXP pathway; isopentenyl diphosphate from 1-deoxy-D-xylulose 5-phosphate: step 1/6. Functionally, catalyzes the NADPH-dependent rearrangement and reduction of 1-deoxy-D-xylulose-5-phosphate (DXP) to 2-C-methyl-D-erythritol 4-phosphate (MEP). This chain is 1-deoxy-D-xylulose 5-phosphate reductoisomerase, found in Bacteroides thetaiotaomicron (strain ATCC 29148 / DSM 2079 / JCM 5827 / CCUG 10774 / NCTC 10582 / VPI-5482 / E50).